Here is a 398-residue protein sequence, read N- to C-terminus: Pentalenolactone synthase (398 aa).

Position 347 (Cys347) interacts with heme.

This sequence belongs to the cytochrome P450 family. It depends on heme as a cofactor.

The catalysed reaction is pentalenolactone F + 2 reduced [2Fe-2S]-[ferredoxin] + O2 + 2 H(+) = pentalenolactone + 2 oxidized [2Fe-2S]-[ferredoxin] + 2 H2O. The protein operates within antibiotic biosynthesis; pentalenolactone biosynthesis. Functionally, catalyzes the final step in the biosynthesis of the sesquiterpenoid antibiotic pentalenolactone by mediating the oxidative rearrangement of pentalenolactone F to pentalenolactone. The protein is Pentalenolactone synthase (penM) of Streptomyces exfoliatus (Streptomyces hydrogenans).